The chain runs to 200 residues: Small ribosomal subunit protein uS4c (200 aa).

An S4 RNA-binding domain is found at 91-154 (MRLDNVVFRL…NSRKMVTEAN (64 aa)).

It belongs to the universal ribosomal protein uS4 family. Part of the 30S ribosomal subunit. Contacts protein S5. The interaction surface between S4 and S5 is involved in control of translational fidelity.

It is found in the plastid. The protein resides in the chloroplast. In terms of biological role, one of the primary rRNA binding proteins, it binds directly to 16S rRNA where it nucleates assembly of the body of the 30S subunit. With S5 and S12 plays an important role in translational accuracy. This Oltmannsiellopsis viridis (Marine flagellate) protein is Small ribosomal subunit protein uS4c (rps4).